The sequence spans 519 residues: Alkaline phosphatase, tissue-nonspecific isozyme (519 aa).

Positions 1–16 (MKAFLLTLLAQLCSAS) are cleaved as a signal peptide. Asp-59 is a binding site for Mg(2+). Positions 59 and 109 each coordinate Zn(2+). The active-site Phosphoserine intermediate is Ser-109. A disulfide bridge connects residues Cys-138 and Cys-200. Asn-139 is a glycosylation site (N-linked (GlcNAc...) asparagine). Mg(2+) is bound at residue Thr-172. The N-linked (GlcNAc...) asparagine glycan is linked to Asn-229. Glu-234 is a binding site for Ca(2+). Asn-278 carries an N-linked (GlcNAc...) asparagine glycan. Positions 289 and 290 each coordinate Ca(2+). An N-linked (GlcNAc...) asparagine glycan is attached at Asn-302. Position 305 (Asp-305) interacts with Ca(2+). Glu-331 contributes to the Mg(2+) binding site. Zn(2+)-binding residues include Asp-336, His-340, Asp-377, and His-378. Residue Asn-429 is glycosylated (N-linked (GlcNAc...) asparagine). Zn(2+) is bound at residue His-453. An intrachain disulfide couples Cys-488 to Cys-496. Residue Ser-498 is the site of GPI-anchor amidated serine attachment. Positions 499 to 519 (AARPAATATLLPVLLLLLLLC) are cleaved as a propeptide — removed in mature form.

This sequence belongs to the alkaline phosphatase family. In terms of assembly, homodimer. It depends on Mg(2+) as a cofactor. The cofactor is Zn(2+). Ca(2+) is required as a cofactor.

The protein localises to the cell membrane. It is found in the extracellular vesicle membrane. The enzyme catalyses a phosphate monoester + H2O = an alcohol + phosphate. It catalyses the reaction diphosphate + H2O = 2 phosphate + H(+). It carries out the reaction pyridoxal 5'-phosphate + H2O = pyridoxal + phosphate. The catalysed reaction is phosphoethanolamine + H2O = ethanolamine + phosphate. The enzyme catalyses ATP + H2O = ADP + phosphate + H(+). It catalyses the reaction ADP + H2O = AMP + phosphate + H(+). It carries out the reaction AMP + H2O = adenosine + phosphate. In terms of biological role, alkaline phosphatase that metabolizes various phosphate compounds and plays a key role in skeletal mineralization and adaptive thermogenesis. Has broad substrate specificity and can hydrolyze a considerable variety of compounds: however, only a few substrates, such as diphosphate (inorganic pyrophosphate; PPi) and pyridoxal 5'-phosphate (PLP) are natural substrates. Plays an essential role in skeletal and dental mineralization via its ability to hydrolyze extracellular diphosphate, a potent mineralization inhibitor, to phosphate: it thereby promotes hydroxyapatite crystal formation and increases inorganic phosphate concentration. Catalyzes dephosphorylation of PLP to pyridoxal (PL), the transportable form of vitamin B6, in order to provide a sufficient amount of PLP in the brain, an essential cofactor for enzymes catalyzing the synthesis of diverse neurotransmitters. Additionally, also able to mediate ATP degradation in a stepwise manner to adenosine, thereby regulating the availability of ligands for purinergic receptors. Involved in the establishment and growth of feather germs. This chain is Alkaline phosphatase, tissue-nonspecific isozyme (ALPL), found in Gallus gallus (Chicken).